The chain runs to 393 residues: Phospho-N-acetylmuramoyl-pentapeptide-transferase (393 aa).

The next 10 membrane-spanning stretches (helical) occupy residues 29 to 49 (RAVMSAMTALLLGLVFGPWVI), 75 to 95 (TPTMGGVLILLSIAVSTLLWF), 101 to 121 (FVWVVMLVTFGFGAIGWVDDW), 138 to 158 (YLWQSLIGLVAAIYLAFSVSE), 194 to 214 (VSYPLGVFGFIFLTYFVIVGA), 226 to 246 (GLAIMPVVLVGSALGLFAYVT), 263 to 283 (AGELLIFCAAMAGAGLAFLWF), 290 to 310 (VFMGDVGALALGGALGTIAVI), 315 to 335 (IVLGIMGGIFVVEALSVMAQV), and 370 to 390 (QVVVRFWIITMLLCLVGLSTL).

The protein belongs to the glycosyltransferase 4 family. MraY subfamily. Mg(2+) is required as a cofactor.

The protein localises to the cell inner membrane. The catalysed reaction is UDP-N-acetyl-alpha-D-muramoyl-L-alanyl-gamma-D-glutamyl-meso-2,6-diaminopimeloyl-D-alanyl-D-alanine + di-trans,octa-cis-undecaprenyl phosphate = di-trans,octa-cis-undecaprenyl diphospho-N-acetyl-alpha-D-muramoyl-L-alanyl-D-glutamyl-meso-2,6-diaminopimeloyl-D-alanyl-D-alanine + UMP. It functions in the pathway cell wall biogenesis; peptidoglycan biosynthesis. Its function is as follows. Catalyzes the initial step of the lipid cycle reactions in the biosynthesis of the cell wall peptidoglycan: transfers peptidoglycan precursor phospho-MurNAc-pentapeptide from UDP-MurNAc-pentapeptide onto the lipid carrier undecaprenyl phosphate, yielding undecaprenyl-pyrophosphoryl-MurNAc-pentapeptide, known as lipid I. This is Phospho-N-acetylmuramoyl-pentapeptide-transferase from Leptothrix cholodnii (strain ATCC 51168 / LMG 8142 / SP-6) (Leptothrix discophora (strain SP-6)).